Reading from the N-terminus, the 907-residue chain is Protein translocase subunit SecA (907 aa).

ATP is bound by residues Gln-87, 105–109, and Asp-512; that span reads GEGKT. The segment at 869–897 is disordered; the sequence is AESLSAHTPVVREGEKVGRNDPCPCGSGR. Over residues 878-887 the composition is skewed to basic and acidic residues; that stretch reads VVREGEKVGR. The Zn(2+) site is built by Cys-891, Cys-893, Cys-902, and His-903.

It belongs to the SecA family. As to quaternary structure, monomer and homodimer. Part of the essential Sec protein translocation apparatus which comprises SecA, SecYEG and auxiliary proteins SecDF-YajC and YidC. Zn(2+) is required as a cofactor.

Its subcellular location is the cell inner membrane. The protein localises to the cytoplasm. The enzyme catalyses ATP + H2O + cellular proteinSide 1 = ADP + phosphate + cellular proteinSide 2.. Part of the Sec protein translocase complex. Interacts with the SecYEG preprotein conducting channel. Has a central role in coupling the hydrolysis of ATP to the transfer of proteins into and across the cell membrane, serving both as a receptor for the preprotein-SecB complex and as an ATP-driven molecular motor driving the stepwise translocation of polypeptide chains across the membrane. This chain is Protein translocase subunit SecA, found in Shewanella sediminis (strain HAW-EB3).